The following is a 215-amino-acid chain: Adenylate kinase (215 aa).

10–15 (GAGKGT) provides a ligand contact to ATP. The NMP stretch occupies residues 30–59 (STGDMFRAAMKNNTELGKKAKSFMDNGDLV). AMP contacts are provided by residues threonine 31, arginine 36, 57–59 (DLV), 85–88 (GFPR), and glutamine 92. Residues 126-163 (GRWICRTCGKTYHEIYNPPKVPGKCDLDGGELYQREDD) are LID. Position 127 (arginine 127) interacts with ATP. Zn(2+) contacts are provided by cysteine 130 and cysteine 133. Residue 136 to 137 (TY) coordinates ATP. Residues cysteine 150 and aspartate 153 each coordinate Zn(2+). The AMP site is built by arginine 160 and arginine 171. An ATP-binding site is contributed by glutamine 199.

This sequence belongs to the adenylate kinase family. In terms of assembly, monomer.

The protein localises to the cytoplasm. The enzyme catalyses AMP + ATP = 2 ADP. The protein operates within purine metabolism; AMP biosynthesis via salvage pathway; AMP from ADP: step 1/1. Its function is as follows. Catalyzes the reversible transfer of the terminal phosphate group between ATP and AMP. Plays an important role in cellular energy homeostasis and in adenine nucleotide metabolism. This Listeria innocua serovar 6a (strain ATCC BAA-680 / CLIP 11262) protein is Adenylate kinase.